An 814-amino-acid chain; its full sequence is Phenylalanine--tRNA ligase beta subunit (814 aa).

Residues 39-153 (SKNVNGVVLG…LKHELGTPVS (115 aa)) form the tRNA-binding domain. Residues 414–500 (NEDIFIKLRR…RLIGYDRFDL (87 aa)) enclose the B5 domain. Mg(2+) contacts are provided by Asp-478, Asp-484, Glu-487, and Glu-488. The FDX-ACB domain maps to 720 to 813 (PIVPKIERDI…IEKSFQTKLR (94 aa)).

This sequence belongs to the phenylalanyl-tRNA synthetase beta subunit family. Type 1 subfamily. In terms of assembly, tetramer of two alpha and two beta subunits. Mg(2+) serves as cofactor.

It is found in the cytoplasm. It carries out the reaction tRNA(Phe) + L-phenylalanine + ATP = L-phenylalanyl-tRNA(Phe) + AMP + diphosphate + H(+). In Prochlorococcus marinus (strain MIT 9312), this protein is Phenylalanine--tRNA ligase beta subunit.